Consider the following 579-residue polypeptide: 2-isopropylmalate synthase (579 aa).

The Pyruvate carboxyltransferase domain occupies 40–314 (PRWCAVDLRD…DPMIDFSDID (275 aa)). Mg(2+) contacts are provided by Asp49, His253, His255, and Asn289. The tract at residues 456 to 579 (SSKEDGQWGR…VNRAIRDAQA (124 aa)) is regulatory domain.

It belongs to the alpha-IPM synthase/homocitrate synthase family. LeuA type 2 subfamily. Homodimer. Mg(2+) is required as a cofactor.

It is found in the cytoplasm. It carries out the reaction 3-methyl-2-oxobutanoate + acetyl-CoA + H2O = (2S)-2-isopropylmalate + CoA + H(+). Its pathway is amino-acid biosynthesis; L-leucine biosynthesis; L-leucine from 3-methyl-2-oxobutanoate: step 1/4. Functionally, catalyzes the condensation of the acetyl group of acetyl-CoA with 3-methyl-2-oxobutanoate (2-ketoisovalerate) to form 3-carboxy-3-hydroxy-4-methylpentanoate (2-isopropylmalate). The sequence is that of 2-isopropylmalate synthase from Arthrobacter sp. (strain FB24).